A 247-amino-acid polypeptide reads, in one-letter code: MPITVNKLRHDTHHFFYKKIGAIFFISIFATFMNILIDMFIKPDMHIVSIMENNKFINTSSLLEFIQNMNLNEKHELLKYSILKIMESLISKTTLLGSIIILISVVSEPKKKSIVSSIRTFFLFFPSLFILNFLTTFIIQIGFMLLIIPGILLSIILSLSPIILFFKKNRLLDSIRLSMYISWKYIKIIGPGVLFWMCGKFILTMLLAHFSLINKNVLFLISNISMNILFSILIIYLFRFYMIFLRS.

The next 6 helical transmembrane spans lie at 20–40 (IGAIFFISIFATFMNILIDMF), 85–105 (IMESLISKTTLLGSIIILISV), 114–134 (IVSSIRTFFLFFPSLFILNFL), 137–157 (FIIQIGFMLLIIPGILLSIIL), 188–208 (IIGPGVLFWMCGKFILTMLLA), and 218–238 (LFLISNISMNILFSILIIYLF).

The protein belongs to the UPF0259 family.

Its subcellular location is the cell membrane. The chain is UPF0259 membrane protein BU276 from Buchnera aphidicola subsp. Acyrthosiphon pisum (strain APS) (Acyrthosiphon pisum symbiotic bacterium).